Consider the following 469-residue polypeptide: 3-isopropylmalate dehydratase large subunit (469 aa).

[4Fe-4S] cluster-binding residues include Cys347, Cys407, and Cys410.

This sequence belongs to the aconitase/IPM isomerase family. LeuC type 1 subfamily. As to quaternary structure, heterodimer of LeuC and LeuD. [4Fe-4S] cluster is required as a cofactor.

The catalysed reaction is (2R,3S)-3-isopropylmalate = (2S)-2-isopropylmalate. It functions in the pathway amino-acid biosynthesis; L-leucine biosynthesis; L-leucine from 3-methyl-2-oxobutanoate: step 2/4. In terms of biological role, catalyzes the isomerization between 2-isopropylmalate and 3-isopropylmalate, via the formation of 2-isopropylmaleate. This Prochlorococcus marinus (strain MIT 9515) protein is 3-isopropylmalate dehydratase large subunit.